A 950-amino-acid polypeptide reads, in one-letter code: Glycine dehydrogenase (decarboxylating) (950 aa).

K698 carries the N6-(pyridoxal phosphate)lysine modification.

Belongs to the GcvP family. As to quaternary structure, the glycine cleavage system is composed of four proteins: P, T, L and H. Pyridoxal 5'-phosphate is required as a cofactor.

The catalysed reaction is N(6)-[(R)-lipoyl]-L-lysyl-[glycine-cleavage complex H protein] + glycine + H(+) = N(6)-[(R)-S(8)-aminomethyldihydrolipoyl]-L-lysyl-[glycine-cleavage complex H protein] + CO2. The glycine cleavage system catalyzes the degradation of glycine. The P protein binds the alpha-amino group of glycine through its pyridoxal phosphate cofactor; CO(2) is released and the remaining methylamine moiety is then transferred to the lipoamide cofactor of the H protein. This chain is Glycine dehydrogenase (decarboxylating), found in Neisseria meningitidis serogroup C (strain 053442).